The chain runs to 217 residues: Peroxiredoxin (217 aa).

The 158-residue stretch at 2 to 159 (VVIGEKFPEV…IVRLVKALQT (158 aa)) folds into the Thioredoxin domain. Residue Cys46 is the Cysteine sulfenic acid (-SOH) intermediate of the active site. Arg122 lines the substrate pocket.

This sequence belongs to the peroxiredoxin family. Prx6 subfamily. Homodecamer. Pentamer of dimers that assemble into a ring structure.

The protein resides in the cytoplasm. The catalysed reaction is a hydroperoxide + [thioredoxin]-dithiol = an alcohol + [thioredoxin]-disulfide + H2O. Its function is as follows. Thiol-specific peroxidase that catalyzes the reduction of hydrogen peroxide and organic hydroperoxides to water and alcohols, respectively. Plays a role in cell protection against oxidative stress by detoxifying peroxides. In Methanococcus maripaludis (strain DSM 14266 / JCM 13030 / NBRC 101832 / S2 / LL), this protein is Peroxiredoxin.